The primary structure comprises 360 residues: Protein Wnt-2 (360 aa).

Residues Met-1–Ser-26 form the signal peptide. 11 disulfides stabilise this stretch: Cys-76/Cys-87, Cys-127/Cys-135, Cys-137/Cys-157, Cys-206/Cys-220, Cys-208/Cys-215, Cys-278/Cys-309, Cys-294/Cys-304, Cys-308/Cys-348, Cys-324/Cys-339, Cys-326/Cys-336, and Cys-331/Cys-332. The O-palmitoleoyl serine; by PORCN moiety is linked to residue Ser-212. Residue Asn-295 is glycosylated (N-linked (GlcNAc...) asparagine).

It belongs to the Wnt family. Post-translationally, palmitoleoylation is required for efficient binding to frizzled receptors. Depalmitoleoylation leads to Wnt signaling pathway inhibition.

The protein localises to the secreted. It is found in the extracellular space. It localises to the extracellular matrix. Its function is as follows. Ligand for members of the frizzled family of seven transmembrane receptors. Probable developmental protein. May be a signaling molecule which affects the development of discrete regions of tissues. Is likely to signal over only few cell diameters. The protein is Protein Wnt-2 (WNT2) of Eulemur macaco macaco (Black lemur).